Reading from the N-terminus, the 542-residue chain is Phosphoenolpyruvate carboxykinase (ATP) (542 aa).

Positions 67, 208, and 214 each coordinate substrate. Residues K214, H233, and 249-257 each bind ATP; that span reads GLSGTGKTT. Residues K214 and H233 each coordinate Mn(2+). D270 contributes to the Mn(2+) binding site. ATP contacts are provided by residues E298, R334, 450–451, and T456; that span reads RI. R334 provides a ligand contact to substrate.

This sequence belongs to the phosphoenolpyruvate carboxykinase (ATP) family. Monomer. Mn(2+) is required as a cofactor.

It is found in the cytoplasm. It catalyses the reaction oxaloacetate + ATP = phosphoenolpyruvate + ADP + CO2. It functions in the pathway carbohydrate biosynthesis; gluconeogenesis. Functionally, involved in the gluconeogenesis. Catalyzes the conversion of oxaloacetate (OAA) to phosphoenolpyruvate (PEP) through direct phosphoryl transfer between the nucleoside triphosphate and OAA. The protein is Phosphoenolpyruvate carboxykinase (ATP) of Vibrio vulnificus (strain CMCP6).